We begin with the raw amino-acid sequence, 651 residues long: DNA mismatch repair protein MutL (651 aa).

A disordered region spans residues 336–398 (RLDMTEPETG…ANSGYQPENP (63 aa)). The segment covering 385 to 394 (ARESANSGYQ) has biased composition (polar residues).

This sequence belongs to the DNA mismatch repair MutL/HexB family.

In terms of biological role, this protein is involved in the repair of mismatches in DNA. It is required for dam-dependent methyl-directed DNA mismatch repair. May act as a 'molecular matchmaker', a protein that promotes the formation of a stable complex between two or more DNA-binding proteins in an ATP-dependent manner without itself being part of a final effector complex. The sequence is that of DNA mismatch repair protein MutL from Pectobacterium atrosepticum (strain SCRI 1043 / ATCC BAA-672) (Erwinia carotovora subsp. atroseptica).